A 659-amino-acid chain; its full sequence is MDIKFEGNDAECTAGLKKASEGSFVLKDHVLIEFKINGKVAGKIKTPCEGVVTFGKGLKPGIVLNKGQVIATVSECTHAIVIKDMCATCGKDLREKGGRAGQRKEQSTANVSMIHHVPELIVSDTLAKEIGSADENNLITNRKLVLLVDLDQTIIHTSDKPMTVDTENHKDITKYNLHSRVYTTKLRPHTTEFLNKMSNMYEMHIVTYGQRQYAHRIAQILDPDARLFEQRILSRDELFSAQHKTNNLKALFPCGDNLVVIIDDRSDVWMYSEALIQIKPYRFFKEVGDINAPKNSKEQMPVQIEDDAHEDKVLEEIERVLTNIHDKYYEKHDLRGSEEVLLDVKEVIKEERHKVLDGCVIVFSGIVPMGEKLERTDIYRLCTQFGAVIVPDVTDDVTHVVGARYGTQKVYQANRLNKFVVTVQWVYACVEKWLKADENLFQLTKESTPPVGRPLGSKYVNDLANMDTIGKAALADMNNEVDEALSDDEDDGDNEDEDDDGNDVGEDKGDENLEEKQEKNEEEMDDVEQNGSVENQSGDALENETDSTSRGQKRKHCPEMEDEEEESDSDNEDDDTPMSYKALLSDSRKKGRIVPENEDDAVFDVDDEKGHAPANIDEEEDDEDNEDEEVPESDDDDEFEDMAALIERQISDAVDEKDQ.

The region spanning Ile139–Gln303 is the FCP1 homology domain. Positions Glu351–Leu443 constitute a BRCT domain. Over residues Ala484 to Val504 the composition is skewed to acidic residues. A disordered region spans residues Ala484–Glu640. Residues Gly505–Lys519 are compositionally biased toward basic and acidic residues. A compositionally biased stretch (polar residues) spans Gln529–Gly538. Acidic residues-rich tracts occupy residues Met560–Thr576, Glu596–Asp607, and Ile616–Glu640.

The protein localises to the nucleus. It carries out the reaction O-phospho-L-seryl-[protein] + H2O = L-seryl-[protein] + phosphate. The enzyme catalyses O-phospho-L-threonyl-[protein] + H2O = L-threonyl-[protein] + phosphate. In terms of biological role, during the late stages of oogenesis, dephosphorylates 'Ser-5' of the heptad repeats YSPTSPS in the C-terminal domain of the largest RNA polymerase II subunit ama-1. Similarly, dephosphorylates 'Ser-5' of ama-1 in early embryonic cells prior to the activation of the zygotic transcription program at the 4-cell embryonic stage. May dephosphorylate 'Ser-2' of the ama-1 heptad repeats YSPTSPS in embryonic somatic and germline cells. The polypeptide is RNA polymerase II subunit A C-terminal domain phosphatase (Caenorhabditis elegans).